The sequence spans 819 residues: Metabotropic glutamate receptor-like protein O (819 aa).

An N-terminal signal peptide occupies residues 1 to 19 (MKKVFFLILILNCVVGALS). The Extracellular segment spans residues 20-394 (NKNICKISLL…FVDSYSNSIK (375 aa)). N-linked (GlcNAc...) asparagine glycosylation is found at N99, N185, N277, N295, N330, and N370. A helical transmembrane segment spans residues 395–415 (ISILSVSIFCIFICVLGMIFI). Residues 416 to 428 (TVLRNARILKSSS) lie on the Cytoplasmic side of the membrane. A helical transmembrane segment spans residues 429–449 (PSFLLLILFGCIVIFTGCILF). Residues 450–457 (SQPATDKT) lie on the Extracellular side of the membrane. The helical transmembrane segment at 458-478 (CQGRVWLLSIGYTIFLGSLLI) threads the bilayer. At 479–503 (KNWRVWLLFDNKKLRKRSITNWKLY) the chain is on the cytoplasmic side. The helical transmembrane segment at 504–524 (PWVAGILVVDVLILALWQGLG) threads the bilayer. Residues 525–550 (DIKSESRIIGTSFYQYTNVCTNNDQG) are Extracellular-facing. A helical transmembrane segment spans residues 551 to 571 (SIALYILLAFHGLKLLGTCFI). Topologically, residues 572-587 (SFKIKLVDIEEFNESK) are cytoplasmic. The chain crosses the membrane as a helical span at residues 588–608 (PITTSVFIILFCIFTIILLIA). At 609-624 (PSSSSSSASSPQPIAS) the chain is on the extracellular side. The helical transmembrane segment at 625–645 (LETIICICSVTTTAISIGLLF) threads the bilayer. At 646 to 819 (GDKIYFITTQ…NNENEIISDT (174 aa)) the chain is on the cytoplasmic side. Positions 674–819 (KDCDDDDDDS…NNENEIISDT (146 aa)) are disordered. Over residues 695–712 (NKNKNKNRNQSEKKKRPN) the composition is skewed to basic residues. Residues 726–739 (ESVVFNPPSNNDLT) show a composition bias toward polar residues. Basic and acidic residues predominate over residues 748–768 (GIKEGHGHDSENNDEYEHHED). Residues 769-798 (EDHEYEGEGEDEDHEDEYEVENDIEQEQEQ) show a composition bias toward acidic residues. A compositionally biased stretch (low complexity) spans 799–808 (ESSNISISTK).

This sequence in the N-terminal section; belongs to the BMP lipoprotein family. It in the C-terminal section; belongs to the G-protein coupled receptor 3 family. GABA-B receptor subfamily.

It localises to the membrane. This chain is Metabotropic glutamate receptor-like protein O (grlO), found in Dictyostelium discoideum (Social amoeba).